The sequence spans 254 residues: Kallikrein-4 (254 aa).

The N-terminal stretch at 1–26 (MATAGNPWGWFLGYLILGVAGSLVSG) is a signal peptide. A propeptide spanning residues 27–30 (SCSQ) is cleaved from the precursor. The 222-residue stretch at 31–252 (IINGEDCSPH…FTEWIEKTVQ (222 aa)) folds into the Peptidase S1 domain. Cystine bridges form between Cys37/Cys167, Cys56/Cys72, Cys141/Cys241, Cys148/Cys213, Cys178/Cys192, and Cys203/Cys228. His40 is a binding site for Zn(2+). His71 serves as the catalytic Charge relay system. Glu91 contacts Zn(2+). The active-site Charge relay system is the Asp116. A glycan (N-linked (GlcNAc...) asparagine) is linked at Asn169. Ser207 functions as the Charge relay system in the catalytic mechanism.

It belongs to the peptidase S1 family. Kallikrein subfamily. In terms of processing, N-glycosylated. The N-glycan structures are of complex diantennary or triantennary type, which may be further modified with up to 2 sialic acid residues. As to expression, expressed in prostate.

Its subcellular location is the secreted. Its function is as follows. Has a major role in enamel formation. Required during the maturation stage of tooth development for clearance of enamel proteins and normal structural patterning of the crystalline matrix. In Homo sapiens (Human), this protein is Kallikrein-4 (KLK4).